The primary structure comprises 446 residues: Serine--tRNA ligase, mitochondrial (446 aa).

Position 251 to 253 (251 to 253 (TAE)) interacts with L-serine. ATP-binding positions include 284 to 286 (RAE) and valine 300. Glutamate 307 serves as a coordination point for L-serine. 371-374 (EISS) provides a ligand contact to ATP. Threonine 407 is a binding site for L-serine.

Belongs to the class-II aminoacyl-tRNA synthetase family. Type-1 seryl-tRNA synthetase subfamily. In terms of assembly, homodimer. The tRNA molecule binds across the dimer.

The protein resides in the mitochondrion matrix. The enzyme catalyses tRNA(Ser) + L-serine + ATP = L-seryl-tRNA(Ser) + AMP + diphosphate + H(+). Its function is as follows. Catalyzes the attachment of serine to tRNA(Ser). The sequence is that of Serine--tRNA ligase, mitochondrial (DIA4) from Saccharomyces cerevisiae (strain ATCC 204508 / S288c) (Baker's yeast).